A 157-amino-acid polypeptide reads, in one-letter code: ATP synthase subunit b 1 (157 aa).

A helical transmembrane segment spans residues 7–29 (LFGQMVTFALLVWFTMKYVWPPL).

The protein belongs to the ATPase B chain family. In terms of assembly, F-type ATPases have 2 components, F(1) - the catalytic core - and F(0) - the membrane proton channel. F(1) has five subunits: alpha(3), beta(3), gamma(1), delta(1), epsilon(1). F(0) has three main subunits: a(1), b(2) and c(10-14). The alpha and beta chains form an alternating ring which encloses part of the gamma chain. F(1) is attached to F(0) by a central stalk formed by the gamma and epsilon chains, while a peripheral stalk is formed by the delta and b chains.

The protein localises to the cell inner membrane. Its function is as follows. F(1)F(0) ATP synthase produces ATP from ADP in the presence of a proton or sodium gradient. F-type ATPases consist of two structural domains, F(1) containing the extramembraneous catalytic core and F(0) containing the membrane proton channel, linked together by a central stalk and a peripheral stalk. During catalysis, ATP synthesis in the catalytic domain of F(1) is coupled via a rotary mechanism of the central stalk subunits to proton translocation. Functionally, component of the F(0) channel, it forms part of the peripheral stalk, linking F(1) to F(0). The polypeptide is ATP synthase subunit b 1 (Methylococcus capsulatus (strain ATCC 33009 / NCIMB 11132 / Bath)).